Reading from the N-terminus, the 517-residue chain is Optineurin (517 aa).

Coiled-coil stretches lie at residues 15-127 (NLGS…DLVA) and 174-453 (KAES…LGRH). Disordered regions lie at residues 216–237 (KLEHADSSAQTSLPSAAETNAS) and 454–488 (SMSEMQRRHVPRGANPQGPTAPNNLPGGRGEWQQQ). Residues 222–237 (SSAQTSLPSAAETNAS) show a composition bias toward polar residues. The CCHC NOA-type zinc-finger motif lies at 487–517 (QQNIPDHACPKCGEVLPDLDSLQIHIMDCII). Zn(2+)-binding residues include Cys495, Cys498, His511, and Cys515.

Its subcellular location is the cytoplasm. The protein localises to the perinuclear region. It is found in the golgi apparatus. It localises to the trans-Golgi network. The protein resides in the cytoplasmic vesicle. Its subcellular location is the recycling endosome. The protein localises to the autophagosome. Functionally, probably part of the TNF-alpha signaling pathway that can shift the equilibrium toward induction of cell death. May act by regulating membrane trafficking and cellular morphogenesis. The sequence is that of Optineurin (optn) from Danio rerio (Zebrafish).